The primary structure comprises 587 residues: MNFNHHFTWSLVIISQIFQVQAGFGDPREALLEIQQKHGKPCDCAGGYVSSPPTNSLTTVSCSTYTAYSVTNSLKWQCVSTPTTASPTHIGSCPSQCNSQSYDSVHATCYNHYQQCTIGNKTYLTATMIRDKSPSSGDGNVPTILGNNQNLIIAGCPENKKGQVVCWNSQPSVHMSDGGGPQDKVREIIVNKKFEELHKSLFPELSYHPLALPEARGKEKIDAHTFDLLATVHSLLNVSSQRQLAEDCWLCLRSGDPVPLALPYDNTSCSNSTFFFNCSNCSCLITPPFLVQPFNFTHSVCLYADYQNNSFDIDVGLAGFTNCSSYINISKPSSPLCAPNSSVFVCGNNKAYTYLPTNWTGSCVLATLLPDIDIIPGSEPVPIPAIDHFLGRPKRAIQFIPLVIGLGITTAVSTGTAGLGVSLTQYTKLSHQLISDVQAISSTIQDLQDQVDSLAEVVLQNRRGLDLLTAEQGGICLALQEKCCFYANKSGIVRDKIKNLQDDLEKRRKQLIDNPFWTGFHGLLPYVMPLLGPLLCLLLVLSFGPIIFNKLMTFIKHQIESIQAKPIQVHYHRLEQEDHGGSYLNLT.

An N-terminal signal peptide occupies residues 1–22; that stretch reads MNFNHHFTWSLVIISQIFQVQA. Over 23–527 the chain is Extracellular; that stretch reads GFGDPREALL…TGFHGLLPYV (505 aa). Residues Asn-120 and Asn-237 are each glycosylated (N-linked (GlcNAc...) asparagine; by host). Positions 248-251 match the CXXC motif; it reads CWLC. Disulfide bonds link Cys-248/Cys-251, Cys-248/Cys-484, and Cys-476/Cys-483. 10 N-linked (GlcNAc...) asparagine; by host glycosylation sites follow: Asn-266, Asn-271, Asn-277, Asn-280, Asn-295, Asn-308, Asn-322, Asn-328, Asn-340, and Asn-358. The tract at residues 399–419 is fusion peptide; it reads FIPLVIGLGITTAVSTGTAGL. 2 coiled-coil regions span residues 420 to 470 and 480 to 516; these read GVSL…LLTA and QEKC…DNPF. Positions 459-475 are immunosuppression; that stretch reads LQNRRGLDLLTAEQGGI. The CX6CC signature appears at 476-484; the sequence is CLALQEKCC. The N-linked (GlcNAc...) asparagine; by host glycan is linked to Asn-488. A helical transmembrane segment spans residues 528 to 548; it reads MPLLGPLLCLLLVLSFGPIIF. The Cytoplasmic segment spans residues 549-587; it reads NKLMTFIKHQIESIQAKPIQVHYHRLEQEDHGGSYLNLT. The short motif at 571-574 is the YXXL motif; contains endocytosis signal element; the sequence is YHRL.

The mature envelope protein (Env) consists of a trimer of SU-TM heterodimers attached by a labile interchain disulfide bond. In terms of processing, specific enzymatic cleavages in vivo yield mature proteins. Envelope glycoproteins are synthesized as an inactive precursor that is N-glycosylated and processed likely by host cell furin or by a furin-like protease in the Golgi to yield the mature SU and TM proteins. The cleavage site between SU and TM requires the minimal sequence [KR]-X-[KR]-R. The R-peptide is released from the C-terminus of the cytoplasmic tail of the TM protein upon particle formation as a result of proteolytic cleavage by the viral protease. Cleavage of this peptide is required for TM to become fusogenic. Post-translationally, the CXXC motif is highly conserved across a broad range of retroviral envelope proteins. It is thought to participate in the formation of a labile disulfide bond possibly with the CX6CC motif present in the transmembrane protein. Isomerization of the intersubunit disulfide bond to an SU intrachain disulfide bond is thought to occur upon receptor recognition in order to allow membrane fusion.

It is found in the virion membrane. Its subcellular location is the host cell membrane. The surface protein (SU) attaches the virus to the host cell by binding to its receptor. This interaction triggers the refolding of the transmembrane protein (TM) and is thought to activate its fusogenic potential by unmasking its fusion peptide. Fusion occurs at the host cell plasma membrane. In terms of biological role, the transmembrane protein (TM) acts as a class I viral fusion protein. Under the current model, the protein has at least 3 conformational states: pre-fusion native state, pre-hairpin intermediate state, and post-fusion hairpin state. During viral and target cell membrane fusion, the coiled coil regions (heptad repeats) assume a trimer-of-hairpins structure, positioning the fusion peptide in close proximity to the C-terminal region of the ectodomain. The formation of this structure appears to drive apposition and subsequent fusion of viral and target cell membranes. Membranes fusion leads to delivery of the nucleocapsid into the cytoplasm. This is Envelope glycoprotein (env) from Simian retrovirus SRV-1.